Reading from the N-terminus, the 552-residue chain is FERRY endosomal RAB5 effector complex subunit 3 (552 aa).

Serine 79 is subject to Phosphoserine.

Component of the FERRY complex composed of five subunits, TBCK, PPP1R21, FERRY3, CRYZL1 and GATD1 with a ratio of 1:2:1:2:4, respectively.

The protein resides in the cytoplasm. Its subcellular location is the early endosome. Its function is as follows. Component of the FERRY complex (Five-subunit Endosomal Rab5 and RNA/ribosome intermediary). The FERRY complex directly interacts with mRNAs and RAB5A, and functions as a RAB5A effector involved in the localization and the distribution of specific mRNAs most likely by mediating their endosomal transport. The complex recruits mRNAs and ribosomes to early endosomes through direct mRNA-interaction. Plays a role in mast cell degranulation. The polypeptide is FERRY endosomal RAB5 effector complex subunit 3 (Mus musculus (Mouse)).